Consider the following 67-residue polypeptide: UPF0337 protein BCE_3655 (67 aa).

It belongs to the UPF0337 (CsbD) family.

This is UPF0337 protein BCE_3655 from Bacillus cereus (strain ATCC 10987 / NRS 248).